The primary structure comprises 542 residues: Chaperonin GroEL (542 aa).

ATP is bound by residues 29–32 (TLGP), 86–90 (DGTTT), glycine 413, 478–480 (DAL), and aspartate 494.

The protein belongs to the chaperonin (HSP60) family. Forms a cylinder of 14 subunits composed of two heptameric rings stacked back-to-back. Interacts with the co-chaperonin GroES.

It localises to the cytoplasm. The enzyme catalyses ATP + H2O + a folded polypeptide = ADP + phosphate + an unfolded polypeptide.. In terms of biological role, together with its co-chaperonin GroES, plays an essential role in assisting protein folding. The GroEL-GroES system forms a nano-cage that allows encapsulation of the non-native substrate proteins and provides a physical environment optimized to promote and accelerate protein folding. In Clostridioides difficile (strain 630) (Peptoclostridium difficile), this protein is Chaperonin GroEL.